Here is a 1065-residue protein sequence, read N- to C-terminus: RNA2 polyprotein (1065 aa).

As to quaternary structure, interacts with the large capsid protein. Interacts with the movement protein (via C-terminus). Interacts with the small capsid protein. Homomultimer; assembles as pentons. In terms of assembly, interacts (via C-terminus) with the small capsid protein. Specific enzymatic cleavages by picornain 3C-like protease in vivo yield mature proteins.

It localises to the host endoplasmic reticulum. Its subcellular location is the host cell junction. It is found in the host plasmodesma. The protein localises to the virion. Functionally, acts as a suppressor of post-transcriptional gene silencing (PTGS), a mechanism of plant viral defense that limits the accumulation of viral RNAs. Binds ssRNA. Transports the viral genome to neighboring plant cells directly through plasmosdesmata, without any budding. The movement protein allows efficient cell to cell propagation, by bypassing the host cell wall barrier. Acts by forming a tubular structure at the host plasmodesmata, enlarging it enough to allow free passage of virion capsids. Binds to GTP and to single-stranded RNA and single-stranded DNA in a non-sequence-specific manner. Also acts as a suppressor of post-transcriptional gene silencing (PTGS), a mechanism of plant viral defense that limits the accumulation of viral RNAs. In terms of biological role, together with the small capsid protein, forms an icosahedral capsid (T=3) enclosing the viral positive strand RNA genome, with a diameter of approximately 300 Angstroms. The large capsid protein interacts with the viral RNA. Also acts as a suppressor of post-transcriptional gene silencing (PTGS), a mechanism of plant viral defense that limits the accumulation of viral RNAs. Binds ssRNA. Its function is as follows. Together with the large capsid protein, forms an icosahedral capsid (T=3) enclosing the viral positive strand RNA genome, with a diameter of approximately 300 Angstroms. The capsid is formed from 60 copies each of the large and the small capsid protein. The small capsid protein forms the turrets at the fivefold axes of the viral particle. In Broad bean wilt virus 2 (BBWV-2), this protein is RNA2 polyprotein.